A 296-amino-acid chain; its full sequence is NAD kinase (296 aa).

Residue aspartate 72 is the Proton acceptor of the active site. Residues 72-73 (DG), 146-147 (ND), arginine 157, lysine 174, aspartate 176, 187-192 (TAYALS), and glutamine 247 each bind NAD(+).

Belongs to the NAD kinase family. A divalent metal cation serves as cofactor.

It localises to the cytoplasm. The catalysed reaction is NAD(+) + ATP = ADP + NADP(+) + H(+). Involved in the regulation of the intracellular balance of NAD and NADP, and is a key enzyme in the biosynthesis of NADP. Catalyzes specifically the phosphorylation on 2'-hydroxyl of the adenosine moiety of NAD to yield NADP. The sequence is that of NAD kinase from Pseudomonas fluorescens (strain Pf0-1).